The sequence spans 104 residues: Large ribosomal subunit protein uL24 (104 aa).

The span at 82 to 92 shows a compositional bias: basic and acidic residues; sequence RIGYRTDENGK. The disordered stretch occupies residues 82 to 104; sequence RIGYRTDENGKRVRISRRNGKDI. A compositionally biased stretch (basic residues) spans 93–104; the sequence is RVRISRRNGKDI.

Belongs to the universal ribosomal protein uL24 family. As to quaternary structure, part of the 50S ribosomal subunit.

Its function is as follows. One of two assembly initiator proteins, it binds directly to the 5'-end of the 23S rRNA, where it nucleates assembly of the 50S subunit. Functionally, one of the proteins that surrounds the polypeptide exit tunnel on the outside of the subunit. The protein is Large ribosomal subunit protein uL24 of Nocardia farcinica (strain IFM 10152).